The primary structure comprises 718 residues: Sec-independent protein translocase protein TatCt (718 aa).

The next 8 helical transmembrane spans lie at 34-54 (VFIV…LYVW), 84-104 (ILLQ…PPFI), 137-157 (LFAA…FAFL), 178-198 (FIFL…AMTG), 214-231 (WRHA…FTPP), 234-254 (FTQI…LYLA), 280-300 (LAGV…YGGV), and 325-345 (LGAF…AYLV). The disordered stretch occupies residues 421–451 (REAEAADAEDEPGELEDRTTRAGGAFVSELT). Positions 425–434 (AADAEDEPGE) are enriched in acidic residues. A run of 6 helical transmembrane segments spans residues 478–498 (AFWV…WLYT), 539–559 (FSTI…VWPA), 572–592 (TVFV…ALGY), 621–641 (FFWL…VPIL), 661–681 (EVTV…ITTM), and 682–702 (FMVT…LFVL).

Belongs to the TatC family. As to quaternary structure, forms a complex with TatA.

The protein resides in the cell membrane. Its function is as follows. Part of the twin-arginine translocation (Tat) system that transports large folded proteins containing a characteristic twin-arginine motif in their signal peptide across membranes. The protein is Sec-independent protein translocase protein TatCt of Haloferax volcanii (strain ATCC 29605 / DSM 3757 / JCM 8879 / NBRC 14742 / NCIMB 2012 / VKM B-1768 / DS2) (Halobacterium volcanii).